The primary structure comprises 432 residues: Isocitrate lyase (432 aa).

The tract at residues 1 to 24 (MSNVGKPRTAQEIQQDWDTNPRWN) is disordered. A compositionally biased stretch (polar residues) spans 11–22 (QEIQQDWDTNPR). 93 to 95 (SGW) is a substrate binding site. Mg(2+) is bound at residue aspartate 155. Residue cysteine 193 is the Proton acceptor of the active site. Substrate is bound by residues 194–195 (GH), arginine 230, 315–319 (NCSPS), and threonine 349.

This sequence belongs to the isocitrate lyase/PEP mutase superfamily. Isocitrate lyase family. In terms of assembly, homotetramer. Requires Mg(2+) as cofactor.

It catalyses the reaction D-threo-isocitrate = glyoxylate + succinate. It participates in carbohydrate metabolism; glyoxylate cycle; (S)-malate from isocitrate: step 1/2. With respect to regulation, inhibited by 3-phosphoglycerate, 6-phosphogluconate, phosphoenolpyruvate (PEP), fructose 1,6-bisphosphate, glycolate, oxalate, and itaconate. In terms of biological role, involved in the metabolic adaptation in response to environmental changes. Catalyzes the reversible formation of succinate and glyoxylate from isocitrate, a key step of the glyoxylate cycle, which operates as an anaplerotic route for replenishing the tricarboxylic acid cycle during growth on fatty acid substrates. This Corynebacterium glutamicum (strain ATCC 13032 / DSM 20300 / JCM 1318 / BCRC 11384 / CCUG 27702 / LMG 3730 / NBRC 12168 / NCIMB 10025 / NRRL B-2784 / 534) protein is Isocitrate lyase.